The chain runs to 450 residues: Equilibrative nucleotide transporter 1 (450 aa).

The next 11 helical transmembrane spans lie at 63 to 83 (FAYI…NAFI), 101 to 121 (IFAV…VVFY), 133 to 153 (LGLL…LVYV), 168 to 188 (AAVA…IGVA), 196 to 216 (MQAV…LRIL), 234 to 254 (LYFA…NVAH), 300 to 320 (HGFG…GYIT), 334 to 354 (ILLI…TAVF), 361 to 381 (IAVG…GCLH), 394 to 414 (ILTC…MILA), and 430 to 450 (TVMF…FWVI).

It belongs to the SLC29A/ENT transporter (TC 2.A.57) family. In young seedlings, expressed in root elongation zone, root cortex, root-hair, at the transition to the shoot and cotyledons. Expressed in hydathodes of fully developed leaves and pollen.

The protein localises to the vacuole membrane. Functionally, nucleoside transporter involved in adenosine transport and required for nucleotide metabolism which influences growth and pollen germination. Has high affinity for adenosine when expressed in a heterologous system (yeast). This is Equilibrative nucleotide transporter 1 (ENT1) from Arabidopsis thaliana (Mouse-ear cress).